Here is an 88-residue protein sequence, read N- to C-terminus: MGINETMMFKVDNEKENEAKEILVSVHQALKEKGYNPINQMVGYILSGDPTYITNYKNARSIVRRLERDELLEEVLKFYLENHNNEPE.

This sequence belongs to the UPF0297 family.

In Ruminiclostridium cellulolyticum (strain ATCC 35319 / DSM 5812 / JCM 6584 / H10) (Clostridium cellulolyticum), this protein is UPF0297 protein Ccel_2240.